The sequence spans 328 residues: Aryl-hydrocarbon-interacting protein-like 1 (328 aa).

Residues 53-145 (KQVGQPMSII…DLDELQKEPQ (93 aa)) enclose the PPIase FKBP-type domain. TPR repeat units lie at residues 178 to 211 (VPLL…LRNL), 230 to 263 (NTLI…HPGI), and 264 to 297 (VKAY…EPSM).

In terms of assembly, interacts with NUB1.

The protein resides in the cytoplasm. The protein localises to the nucleus. Its function is as follows. May be important in protein trafficking and/or protein folding and stabilization. This chain is Aryl-hydrocarbon-interacting protein-like 1 (Aipl1), found in Mus musculus (Mouse).